A 114-amino-acid polypeptide reads, in one-letter code: T cell receptor beta variable 9 (114 aa).

The signal sequence occupies residues 1 to 21 (MGFRLLCCVAFCLLGAGPVDS). Residues 22 to 114 (GVTQTPKHLI…SALYFCASSV (93 aa)) form the Ig-like domain. A disulfide bridge connects residues cysteine 42 and cysteine 110. An N-linked (GlcNAc...) asparagine glycan is attached at asparagine 96.

In terms of assembly, alpha-beta TR is a heterodimer composed of an alpha and beta chain; disulfide-linked. The alpha-beta TR is associated with the transmembrane signaling CD3 coreceptor proteins to form the TR-CD3 (TcR or TCR). The assembly of alpha-beta TR heterodimers with CD3 occurs in the endoplasmic reticulum where a single alpha-beta TR heterodimer associates with one CD3D-CD3E heterodimer, one CD3G-CD3E heterodimer and one CD247 homodimer forming a stable octameric structure. CD3D-CD3E and CD3G-CD3E heterodimers preferentially associate with TR alpha and TR beta chains, respectively. The association of the CD247 homodimer is the last step of TcR assembly in the endoplasmic reticulum and is required for transport to the cell surface.

Its subcellular location is the cell membrane. Its function is as follows. V region of the variable domain of T cell receptor (TR) beta chain that participates in the antigen recognition. Alpha-beta T cell receptors are antigen specific receptors which are essential to the immune response and are present on the cell surface of T lymphocytes. Recognize peptide-major histocompatibility (MH) (pMH) complexes that are displayed by antigen presenting cells (APC), a prerequisite for efficient T cell adaptive immunity against pathogens. Binding of alpha-beta TR to pMH complex initiates TR-CD3 clustering on the cell surface and intracellular activation of LCK that phosphorylates the ITAM motifs of CD3G, CD3D, CD3E and CD247 enabling the recruitment of ZAP70. In turn ZAP70 phosphorylates LAT, which recruits numerous signaling molecules to form the LAT signalosome. The LAT signalosome propagates signal branching to three major signaling pathways, the calcium, the mitogen-activated protein kinase (MAPK) kinase and the nuclear factor NF-kappa-B (NF-kB) pathways, leading to the mobilization of transcription factors that are critical for gene expression and essential for T cell growth and differentiation. The T cell repertoire is generated in the thymus, by V-(D)-J rearrangement. This repertoire is then shaped by intrathymic selection events to generate a peripheral T cell pool of self-MH restricted, non-autoaggressive T cells. Post-thymic interaction of alpha-beta TR with the pMH complexes shapes TR structural and functional avidity. The protein is T cell receptor beta variable 9 of Homo sapiens (Human).